Here is a 385-residue protein sequence, read N- to C-terminus: MTSTIGLGMPTAPAAVLAPRRKTRQLMVGSVGVGSDHPVSVQSMTTTKTHDVNATLQQIAQLTASGCDIVRVACPRQEDADALATIAKKSQIPVIADIHFQPRYIFAAIDAGCAAVRVNPGNIKEFDGRVKEVAKAAGAAGIPIRIGVNAGSLDKRMLEKYGKATPEALVESALWEASLFEEHGFGDIKISVKHNDPVIMVEAYRQLAAQCDYPLHLGVTEAGPAFQGTIKSAVAFGALLSEGIGDTIRVSLSAPPVEEVKVGTQILQSLNLRPRKLEIVSCPSCGRAQVDVYTLANEVTAGLEGMEVPLRVAVMGCVVNGPGEAREADLGVASGNGKGQIFVKGQVIKTVPEHQIVETLIEEAMRIAEEMGEQAGSGEPVVTVS.

Residues Cys-282, Cys-285, Cys-317, and Glu-324 each contribute to the [4Fe-4S] cluster site.

It belongs to the IspG family. [4Fe-4S] cluster serves as cofactor.

The catalysed reaction is (2E)-4-hydroxy-3-methylbut-2-enyl diphosphate + oxidized [flavodoxin] + H2O + 2 H(+) = 2-C-methyl-D-erythritol 2,4-cyclic diphosphate + reduced [flavodoxin]. The protein operates within isoprenoid biosynthesis; isopentenyl diphosphate biosynthesis via DXP pathway; isopentenyl diphosphate from 1-deoxy-D-xylulose 5-phosphate: step 5/6. Functionally, converts 2C-methyl-D-erythritol 2,4-cyclodiphosphate (ME-2,4cPP) into 1-hydroxy-2-methyl-2-(E)-butenyl 4-diphosphate. The sequence is that of 4-hydroxy-3-methylbut-2-en-1-yl diphosphate synthase (flavodoxin) from Nocardia farcinica (strain IFM 10152).